The following is a 1260-amino-acid chain: Myosin-1 (1260 aa).

The 680-residue stretch at 34-713 folds into the Myosin motor domain; it reads VGVSDLTLLS…TLFALEHMRD (680 aa). 127–134 serves as a coordination point for ATP; the sequence is GESGAGKT. Phosphoserine is present on Ser-355. Positions 402–484 are actin-binding; sequence SIGILDIYGF…PGIFATLDDS (83 aa). IQ domains lie at 717–737 and 738–763; these read YNMA…RIDS and AIKI…YGHR. Residues 769–959 form the TH1 domain; the sequence is KERRAMSLLG…TISVRQGRPA (191 aa). Composition is skewed to polar residues over residues 948 to 963 and 972 to 988; these read SSTI…NSRQ and TLLS…SKGY. The segment at 948 to 1106 is disordered; that stretch reads SSTISVRQGR…PPPPTKQNIP (159 aa). A compositionally biased stretch (low complexity) spans 989–1013; that stretch reads GQQQHAQPSYGQQQQQQQRYAPQSH. Over residues 1030–1064 the composition is skewed to polar residues; it reads QQNFAASAAQTAYHPQQASHARVPSTNNAHTQHNR. Positions 1065 to 1082 are enriched in low complexity; that stretch reads QPAQQAAQPVQQAAQPAA. Over residues 1092-1101 the composition is skewed to pro residues; the sequence is APPPPPPPPT. The SH3 domain maps to 1103–1165; the sequence is QNIPKFQAAY…PTNYIVEYKE (63 aa).

The protein belongs to the TRAFAC class myosin-kinesin ATPase superfamily. Myosin family. In terms of processing, phosphorylation of the TEDS site (Ser-355) is required for the polarization of the actin cytoskeleton. Phosphorylation probably activates the myosin-I ATPase activity.

The protein localises to the cytoplasm. The protein resides in the cytoskeleton. It localises to the actin patch. Its function is as follows. Type-I myosin implicated in the organization of the actin cytoskeleton. Required for proper actin cytoskeleton polarization. At the cell cortex, assembles in patch-like structures together with proteins from the actin-polymerizing machinery and promotes actin assembly. Functions as actin nucleation-promoting factor (NPF) for the Arp2/3 complex. This Kluyveromyces lactis (strain ATCC 8585 / CBS 2359 / DSM 70799 / NBRC 1267 / NRRL Y-1140 / WM37) (Yeast) protein is Myosin-1 (MYO1).